We begin with the raw amino-acid sequence, 145 residues long: Endoribonuclease YbeY (145 aa).

Residues His109, His113, and His119 each coordinate Zn(2+).

The protein belongs to the endoribonuclease YbeY family. Zn(2+) serves as cofactor.

It localises to the cytoplasm. In terms of biological role, single strand-specific metallo-endoribonuclease involved in late-stage 70S ribosome quality control and in maturation of the 3' terminus of the 16S rRNA. In Vesicomyosocius okutanii subsp. Calyptogena okutanii (strain HA), this protein is Endoribonuclease YbeY.